The sequence spans 786 residues: Endonuclease MutS2 (786 aa).

An ATP-binding site is contributed by 335–342 (GPNTGGKT). The 76-residue stretch at 711–786 (LDLRGERFEN…GLGVTVVELK (76 aa)) folds into the Smr domain.

It belongs to the DNA mismatch repair MutS family. MutS2 subfamily. Homodimer. Binds to stalled ribosomes, contacting rRNA.

Functionally, endonuclease that is involved in the suppression of homologous recombination and thus may have a key role in the control of bacterial genetic diversity. In terms of biological role, acts as a ribosome collision sensor, splitting the ribosome into its 2 subunits. Detects stalled/collided 70S ribosomes which it binds and splits by an ATP-hydrolysis driven conformational change. Acts upstream of the ribosome quality control system (RQC), a ribosome-associated complex that mediates the extraction of incompletely synthesized nascent chains from stalled ribosomes and their subsequent degradation. Probably generates substrates for RQC. The protein is Endonuclease MutS2 of Bacillus thuringiensis (strain Al Hakam).